A 60-amino-acid chain; its full sequence is Small, acid-soluble spore protein C2 (60 aa).

It belongs to the alpha/beta-type SASP family. SASP are degraded in the first minutes of spore germination and provide amino acids for both new protein synthesis and metabolism.

SASP are bound to spore DNA. They are double-stranded DNA-binding proteins that cause DNA to change to an a-like conformation. They protect the DNA backbone from chemical and enzymatic cleavage and are thus involved in dormant spore's high resistance to UV light. This chain is Small, acid-soluble spore protein C2 (sspC2), found in Clostridium perfringens (strain 13 / Type A).